We begin with the raw amino-acid sequence, 77 residues long: UPF0248 protein Pcal_0252 (77 aa).

Belongs to the UPF0248 family.

The sequence is that of UPF0248 protein Pcal_0252 from Pyrobaculum calidifontis (strain DSM 21063 / JCM 11548 / VA1).